The chain runs to 128 residues: Pi-hexatoxin-Hi1c (128 aa).

Residues M1–G19 form the signal peptide. Residues D20 to R47 constitute a propeptide that is removed on maturation. Intrachain disulfides connect C54–C69, C61–C74, C68–C84, C93–C108, C100–C113, and C107–C124. Domain repeat units lie at residues C54–C84 and C93–C124. The segment at C54–C124 is 2 X approximate repeats with cysteine pattern C-C-CC-C-C.

This sequence belongs to the psalmotoxin-1 family. Double-knot toxin subfamily. As to expression, expressed by the venom gland.

The protein resides in the secreted. Its function is as follows. This toxin potently and selectively inhibits ASIC1a, an isoform of the gene ASIC1. It incompletely inhibits ASIC1a activation in a pH-independent and slowly reversible manner. This toxin acts by binding to and stabilizing the closed state of the channel, thereby impeding the transition into a conducting state. This toxin may bind to the acidic pocket of ASIC1a, since mutation of a key residue of this pocket (Arg-350) abolishes the ability of the toxin to inhibit ASIC1a. In vivo, this toxin protects the brain from neuronal injury when administered up to 8 hours after stroke onset. The polypeptide is Pi-hexatoxin-Hi1c (Hadronyche infensa (Fraser island funnel-web spider)).